Here is a 260-residue protein sequence, read N- to C-terminus: Dof zinc finger protein DOF1.2 (260 aa).

Residues Pro-38–Arg-92 form a Dof-type zinc finger. 4 residues coordinate Zn(2+): Cys-40, Cys-43, Cys-65, and Cys-68. Residues Val-83–Gly-124 are disordered. Basic residues predominate over residues Cys-87–Phe-101.

The protein resides in the nucleus. Transcription factor that binds specifically to a 5'-AA[AG]G-3' consensus core sequence. The chain is Dof zinc finger protein DOF1.2 (DOF1.2) from Arabidopsis thaliana (Mouse-ear cress).